Here is a 616-residue protein sequence, read N- to C-terminus: Probable Xaa-Pro aminopeptidase P (616 aa).

Mn(2+) is bound by residues aspartate 413, aspartate 424, glutamate 522, and glutamate 536.

This sequence belongs to the peptidase M24B family. It depends on Mn(2+) as a cofactor.

The catalysed reaction is Release of any N-terminal amino acid, including proline, that is linked to proline, even from a dipeptide or tripeptide.. Functionally, catalyzes the removal of a penultimate prolyl residue from the N-termini of peptides. The sequence is that of Probable Xaa-Pro aminopeptidase P (AMPP) from Paracoccidioides lutzii (strain ATCC MYA-826 / Pb01) (Paracoccidioides brasiliensis).